The chain runs to 202 residues: Lymphotoxin-alpha (202 aa).

Residues 1 to 33 (MTPLGRLHLLRVLSTPPVFLLGLLLALPLGAQG) form the signal peptide. The 143-residue stretch at 60–202 (PAAHLVGYPS…STVFFGAFAL (143 aa)) folds into the THD domain. An N-linked (GlcNAc...) asparagine glycan is attached at asparagine 93.

It belongs to the tumor necrosis factor family. Homotrimer, and heterotrimer of either two LTB and one LTA subunits or (less prevalent) two LTA and one LTB subunits. Interacts with TNFRSF14.

The protein resides in the secreted. Its subcellular location is the membrane. In terms of biological role, cytokine that in its homotrimeric form binds to TNFRSF1A/TNFR1, TNFRSF1B/TNFBR and TNFRSF14/HVEM. In its heterotrimeric form with LTB binds to TNFRSF3/LTBR. Lymphotoxin is produced by lymphocytes and is cytotoxic for a wide range of tumor cells in vitro and in vivo. The chain is Lymphotoxin-alpha (Lta) from Rattus norvegicus (Rat).